The chain runs to 387 residues: tRNA N6-adenosine threonylcarbamoyltransferase (387 aa).

The Fe cation site is built by histidine 112 and histidine 116. Residues 134–138 (LASGG), aspartate 167, glycine 180, and asparagine 325 contribute to the substrate site. Aspartate 353 lines the Fe cation pocket.

It belongs to the KAE1 / TsaD family. Fe(2+) serves as cofactor.

The protein resides in the cytoplasm. It catalyses the reaction L-threonylcarbamoyladenylate + adenosine(37) in tRNA = N(6)-L-threonylcarbamoyladenosine(37) in tRNA + AMP + H(+). In terms of biological role, required for the formation of a threonylcarbamoyl group on adenosine at position 37 (t(6)A37) in tRNAs that read codons beginning with adenine. Is involved in the transfer of the threonylcarbamoyl moiety of threonylcarbamoyl-AMP (TC-AMP) to the N6 group of A37, together with TsaE and TsaB. TsaD likely plays a direct catalytic role in this reaction. This chain is tRNA N6-adenosine threonylcarbamoyltransferase, found in Rickettsia typhi (strain ATCC VR-144 / Wilmington).